The primary structure comprises 142 residues: Alpha-lactalbumin (142 aa).

A signal peptide spans 1–19 (MMSFVSLLLVGILFHATQA). Residues 20–142 (EQLTKCEVFQ…KLDQWLCEKL (123 aa)) enclose the C-type lysozyme domain. 4 disulfide bridges follow: cysteine 25-cysteine 139, cysteine 47-cysteine 130, cysteine 80-cysteine 96, and cysteine 92-cysteine 110. N-linked (GlcNAc...) asparagine glycosylation is found at asparagine 64 and asparagine 93. The Ca(2+) site is built by lysine 98, aspartate 101, aspartate 103, aspartate 106, and aspartate 107.

This sequence belongs to the glycosyl hydrolase 22 family. As to quaternary structure, lactose synthase (LS) is a heterodimer of a catalytic component, beta1,4-galactosyltransferase (beta4Gal-T1) and a regulatory component, alpha-lactalbumin (LA). Mammary gland specific. Secreted in milk.

The protein resides in the secreted. Regulatory subunit of lactose synthase, changes the substrate specificity of galactosyltransferase in the mammary gland making glucose a good acceptor substrate for this enzyme. This enables LS to synthesize lactose, the major carbohydrate component of milk. In other tissues, galactosyltransferase transfers galactose onto the N-acetylglucosamine of the oligosaccharide chains in glycoproteins. In Ovis aries (Sheep), this protein is Alpha-lactalbumin (LALBA).